Reading from the N-terminus, the 299-residue chain is Bifunctional protein FolD (299 aa).

Residues 168-170 (GRS), Ser-193, and Ile-234 each bind NADP(+).

This sequence belongs to the tetrahydrofolate dehydrogenase/cyclohydrolase family. As to quaternary structure, homodimer.

It carries out the reaction (6R)-5,10-methylene-5,6,7,8-tetrahydrofolate + NADP(+) = (6R)-5,10-methenyltetrahydrofolate + NADPH. The enzyme catalyses (6R)-5,10-methenyltetrahydrofolate + H2O = (6R)-10-formyltetrahydrofolate + H(+). It participates in one-carbon metabolism; tetrahydrofolate interconversion. In terms of biological role, catalyzes the oxidation of 5,10-methylenetetrahydrofolate to 5,10-methenyltetrahydrofolate and then the hydrolysis of 5,10-methenyltetrahydrofolate to 10-formyltetrahydrofolate. The protein is Bifunctional protein FolD of Bartonella henselae (strain ATCC 49882 / DSM 28221 / CCUG 30454 / Houston 1) (Rochalimaea henselae).